The following is a 277-amino-acid chain: uncharacterized protein (277 aa).

32–39 (GPQGSGKS) provides a ligand contact to ATP.

It belongs to the GLYK kinase family.

It localises to the cytoplasm. Its subcellular location is the nucleus. Functionally, has a role in meiosis. This is an uncharacterized protein from Schizosaccharomyces pombe (strain 972 / ATCC 24843) (Fission yeast).